The sequence spans 366 residues: Inactive PGL/p-HBAD biosynthesis glycosyltransferase Mb2982c (366 aa).

Disordered stretches follow at residues 1–23 (MEET…PNAA) and 295–366 (DGDR…HGGP). Residues 295-311 (DGDRGHRWPEPPEERAG) show a composition bias toward basic and acidic residues.

This sequence belongs to the UDP-glycosyltransferase family.

In Mycobacterium bovis (strain ATCC BAA-935 / AF2122/97), this protein is Inactive PGL/p-HBAD biosynthesis glycosyltransferase Mb2982c.